The primary structure comprises 136 residues: Large ribosomal subunit protein uL16 (136 aa).

Belongs to the universal ribosomal protein uL16 family. Part of the 50S ribosomal subunit.

Its function is as follows. Binds 23S rRNA and is also seen to make contacts with the A and possibly P site tRNAs. In Pectobacterium atrosepticum (strain SCRI 1043 / ATCC BAA-672) (Erwinia carotovora subsp. atroseptica), this protein is Large ribosomal subunit protein uL16.